Here is a 505-residue protein sequence, read N- to C-terminus: Facilitated trehalose transporter Tret1 (505 aa).

Topologically, residues 1-46 (MEMEIKDENLRNSVPFVRQLSTDSVKTKTEYDNEDGTPYKSTTQKL) are cytoplasmic. Residues 47–67 (FLWTQLLAAFAVSVGSMNVGF) form a helical membrane-spanning segment. Residues 68 to 91 (SSGYTSPAVLTMNITLDITKEEIT) lie on the Extracellular side of the membrane. N-linked (GlcNAc...) asparagine glycosylation is present at asparagine 80. Residues 92–112 (WVGGLMPLAALVGGIVGGPLI) traverse the membrane as a helical segment. Topologically, residues 113–124 (EYLGRKKTIMGT) are cytoplasmic. A helical membrane pass occupies residues 125–145 (AVPFTIGWMLIANAINVVMVF). Residues 146–149 (AGRV) lie on the Extracellular side of the membrane. The helical transmembrane segment at 150–170 (ICGVCVGIVSLAFPVYIGETI) threads the bilayer. Over 171-175 (QPEVR) the chain is Cytoplasmic. The helical transmembrane segment at 176–196 (GALGLLPTAFGNTGILLAFLV) threads the bilayer. The Extracellular segment spans residues 197–201 (GSYLD). A helical transmembrane segment spans residues 202–222 (WSNLAFFGAAIPVPFFLLMIL). Over 223 to 286 (TPETPRWYVS…QLFSKRYLPA (64 aa)) the chain is Cytoplasmic. Residues 287–307 (VMISLGLMLFQQLTGINAVIF) form a helical membrane-spanning segment. The Extracellular segment spans residues 308 to 323 (YAASIFQMSGSSVDEN). A helical transmembrane segment spans residues 324-344 (LASIIIGVVNFISTFIATMLI). Over 345–350 (DRLGRK) the chain is Cytoplasmic. A helical membrane pass occupies residues 351–371 (VLLYISSVAMITTLLALGAYF). Over 372–390 (YLKQNHIDVTAYGWLPLAC) the chain is Extracellular. The helical transmembrane segment at 391–411 (LVIYVLGFSIGFGPIPWLMLG) threads the bilayer. The Cytoplasmic segment spans residues 412–419 (EILPSKIR). A helical membrane pass occupies residues 420 to 437 (GTAASLATGFNWTCTFIV). Over 438–451 (TKTFQNIIDAIYMH) the chain is Extracellular. A helical transmembrane segment spans residues 452–472 (GTLWLFAVICIGGLLFVIFFV). Residues 473–505 (PETKGKSLEEIEMKLTSGSRRVRNISKQPENIC) lie on the Cytoplasmic side of the membrane.

Belongs to the major facilitator superfamily. Sugar transporter (TC 2.A.1.1) family. Trehalose transporter subfamily. As to expression, expressed in many larval tissues at a low level, moderate levels of expression are seen in testis and head and highest expression in muscle.

Its subcellular location is the cell membrane. Functionally, high-capacity facilitative transporter for trehalose. Does not transport maltose, sucrose or lactose. Mediates the bidirectional transfer of trehalose. Responsible for the transport of trehalose synthesized in the fat body and the incorporation of trehalose into other tissues that require a carbon source, thereby regulating trehalose levels in the hemolymph. The sequence is that of Facilitated trehalose transporter Tret1 from Bombyx mori (Silk moth).